A 523-amino-acid polypeptide reads, in one-letter code: Alpha,alpha-trehalose-phosphate synthase [UDP-forming] (523 aa).

D-glucose 6-phosphate-binding residues include Y98 and D152. Positions 288 and 293 each coordinate UDP. Residues R288 and K293 each coordinate UDP-alpha-D-glucose. Residue R326 participates in D-glucose 6-phosphate binding. D387–E395 is a binding site for UDP-alpha-D-glucose. Residue L391–E395 participates in UDP binding. Residues Q503–D523 form a disordered region. The span at E509–D523 shows a compositional bias: basic and acidic residues.

It belongs to the glycosyltransferase 20 family.

The enzyme catalyses D-glucose 6-phosphate + UDP-alpha-D-glucose = alpha,alpha-trehalose 6-phosphate + UDP + H(+). The protein operates within carbohydrate biosynthesis. Functionally, synthase catalytic subunit of the trehalose synthase complex that catalyzes the production of trehalose from glucose-6-phosphate and UDP-alpha-D-glucose in a two step process. The disaccharide trehalose serves as a storage carbohydrate that is mobilized during conidial germination. Trehalose also serves as a protectant for cell integrity during stress. This Botryotinia fuckeliana (strain B05.10) (Noble rot fungus) protein is Alpha,alpha-trehalose-phosphate synthase [UDP-forming].